The primary structure comprises 130 residues: Histone H2A type 1-B/E (130 aa).

A disordered region spans residues 1–22; it reads MSGRGKQGGKARAKAKTRSSRA. Ser-2 carries the post-translational modification N-acetylserine. Position 2 is a phosphoserine; by RPS6KA5 (Ser-2). A Citrulline; alternate modification is found at Arg-4. A Symmetric dimethylarginine; by PRMT5; alternate modification is found at Arg-4. Lys-6 and Lys-10 each carry N6-(2-hydroxyisobutyryl)lysine; alternate. Residue Lys-6 is modified to N6-acetyllysine; alternate. The segment covering 7–19 has biased composition (basic residues); sequence QGGKARAKAKTRS. Residues Lys-10 and Lys-14 each carry the N6-(beta-hydroxybutyryl)lysine; alternate modification. Lys-10 carries the post-translational modification N6-lactoyllysine; alternate. Lys-10 bears the N6-succinyllysine; alternate mark. Lys-14 participates in a covalent cross-link: Glycyl lysine isopeptide (Lys-Gly) (interchain with G-Cter in ubiquitin); alternate. A Glycyl lysine isopeptide (Lys-Gly) (interchain with G-Cter in ubiquitin) cross-link involves residue Lys-16. An N6-(2-hydroxyisobutyryl)lysine; alternate modification is found at Lys-37. An N6-(beta-hydroxybutyryl)lysine; alternate modification is found at Lys-37. Lys-37 bears the N6-crotonyllysine; alternate mark. 2 positions are modified to N6-(2-hydroxyisobutyryl)lysine: Lys-75 and Lys-76. An N6-(2-hydroxyisobutyryl)lysine; alternate modification is found at Lys-96. Lys-96 carries the post-translational modification N6-(beta-hydroxybutyryl)lysine; alternate. Position 96 is an N6-succinyllysine; alternate (Lys-96). Lys-96 carries the post-translational modification N6-glutaryllysine; alternate. Gln-105 carries the post-translational modification N5-methylglutamine. The residue at position 119 (Lys-119) is an N6-(2-hydroxyisobutyryl)lysine; alternate. Position 119 is an N6-(beta-hydroxybutyryl)lysine; alternate (Lys-119). 2 positions are modified to N6-crotonyllysine; alternate: Lys-119 and Lys-120. Lys-119 and Lys-120 each carry N6-glutaryllysine; alternate. Residue Lys-120 forms a Glycyl lysine isopeptide (Lys-Gly) (interchain with G-Cter in ubiquitin); alternate linkage. Thr-121 bears the Phosphothreonine; by DCAF1 mark. Lys-126 bears the N6-crotonyllysine; alternate mark. An N6-glutaryllysine; alternate modification is found at Lys-126.

This sequence belongs to the histone H2A family. As to quaternary structure, the nucleosome is a histone octamer containing two molecules each of H2A, H2B, H3 and H4 assembled in one H3-H4 heterotetramer and two H2A-H2B heterodimers. The octamer wraps approximately 147 bp of DNA. Deiminated on Arg-4 in granulocytes upon calcium entry. In terms of processing, monoubiquitination of Lys-120 (H2AK119Ub) by RING1, TRIM37 and RNF2/RING2 complex gives a specific tag for epigenetic transcriptional repression and participates in X chromosome inactivation of female mammals. It is involved in the initiation of both imprinted and random X inactivation. Ubiquitinated H2A is enriched in inactive X chromosome chromatin. Ubiquitination of H2A functions downstream of methylation of 'Lys-27' of histone H3 (H3K27me). H2AK119Ub by RNF2/RING2 can also be induced by ultraviolet and may be involved in DNA repair. Monoubiquitination of Lys-120 (H2AK119Ub) by TRIM37 may promote transformation of cells in a number of breast cancers. Following DNA double-strand breaks (DSBs), it is ubiquitinated through 'Lys-63' linkage of ubiquitin moieties by the E2 ligase UBE2N and the E3 ligases RNF8 and RNF168, leading to the recruitment of repair proteins to sites of DNA damage. Ubiquitination at Lys-14 and Lys-16 (H2AK13Ub and H2AK15Ub, respectively) in response to DNA damage is initiated by RNF168 that mediates monoubiquitination at these 2 sites, and 'Lys-63'-linked ubiquitin are then conjugated to monoubiquitin; RNF8 is able to extend 'Lys-63'-linked ubiquitin chains in vitro. Deubiquitinated by USP51 at Lys-14 and Lys-16 (H2AK13Ub and H2AK15Ub, respectively) after damaged DNA is repaired. H2AK119Ub and ionizing radiation-induced 'Lys-63'-linked ubiquitination (H2AK13Ub and H2AK15Ub) are distinct events. Post-translationally, phosphorylation on Ser-2 (H2AS1ph) is enhanced during mitosis. Phosphorylation on Ser-2 by RPS6KA5/MSK1 directly represses transcription. Acetylation of H3 inhibits Ser-2 phosphorylation by RPS6KA5/MSK1. Phosphorylation at Thr-121 (H2AT120ph) by DCAF1 is present in the regulatory region of many tumor suppresor genes and down-regulates their transcription. Glutamine methylation at Gln-105 (H2AQ104me) by FBL is specifically dedicated to polymerase I. It is present at 35S ribosomal DNA locus and impairs binding of the FACT complex. In terms of processing, symmetric dimethylation on Arg-4 by the PRDM1/PRMT5 complex may play a crucial role in the germ-cell lineage. Post-translationally, crotonylation (Kcr) is specifically present in male germ cells and marks testis-specific genes in post-meiotic cells, including X-linked genes that escape sex chromosome inactivation in haploid cells. Crotonylation marks active promoters and enhancers and confers resistance to transcriptional repressors. It is also associated with post-meiotically activated genes on autosomes. Lactylated in macrophages by EP300/P300 by using lactoyl-CoA directly derived from endogenous or exogenous lactate, leading to stimulates gene transcription.

It localises to the nucleus. It is found in the chromosome. Functionally, core component of nucleosome. Nucleosomes wrap and compact DNA into chromatin, limiting DNA accessibility to the cellular machineries which require DNA as a template. Histones thereby play a central role in transcription regulation, DNA repair, DNA replication and chromosomal stability. DNA accessibility is regulated via a complex set of post-translational modifications of histones, also called histone code, and nucleosome remodeling. This Homo sapiens (Human) protein is Histone H2A type 1-B/E.